Here is a 214-residue protein sequence, read N- to C-terminus: Putative glucose-6-phosphate isomerase 1 (214 aa).

Fe cation contacts are provided by H92, H94, E101, and H140.

It belongs to the archaeal-type GPI family. In terms of assembly, homodimer. The cofactor is Fe cation.

The protein resides in the cytoplasm. It catalyses the reaction alpha-D-glucose 6-phosphate = beta-D-fructose 6-phosphate. Its pathway is carbohydrate degradation; glycolysis; D-glyceraldehyde 3-phosphate and glycerone phosphate from D-glucose: step 2/4. The chain is Putative glucose-6-phosphate isomerase 1 (pgiA1) from Rhizobium meliloti (strain 1021) (Ensifer meliloti).